The sequence spans 438 residues: Serine--tRNA ligase (438 aa).

243–245 (TAE) contacts L-serine. Residue 274–276 (RSE) coordinates ATP. Glu297 contributes to the L-serine binding site. Residue 361–364 (EISS) participates in ATP binding. Residue Ser396 participates in L-serine binding.

This sequence belongs to the class-II aminoacyl-tRNA synthetase family. Type-1 seryl-tRNA synthetase subfamily. In terms of assembly, homodimer. The tRNA molecule binds across the dimer.

The protein resides in the cytoplasm. The enzyme catalyses tRNA(Ser) + L-serine + ATP = L-seryl-tRNA(Ser) + AMP + diphosphate + H(+). It catalyses the reaction tRNA(Sec) + L-serine + ATP = L-seryl-tRNA(Sec) + AMP + diphosphate + H(+). Its pathway is aminoacyl-tRNA biosynthesis; selenocysteinyl-tRNA(Sec) biosynthesis; L-seryl-tRNA(Sec) from L-serine and tRNA(Sec): step 1/1. In terms of biological role, catalyzes the attachment of serine to tRNA(Ser). Is also able to aminoacylate tRNA(Sec) with serine, to form the misacylated tRNA L-seryl-tRNA(Sec), which will be further converted into selenocysteinyl-tRNA(Sec). The polypeptide is Serine--tRNA ligase (Ralstonia pickettii (strain 12J)).